The following is a 1011-amino-acid chain: DNA-directed RNA polymerase 2, chloroplastic/mitochondrial (1011 aa).

Residues 307 to 326 are disordered; that stretch reads KGDDNEESGGVENETSMKEQ. Catalysis depends on residues Asp-712, Lys-787, and Asp-944.

This sequence belongs to the phage and mitochondrial RNA polymerase family. As to quaternary structure, interacts with NIP1 and NIP2.

The protein localises to the plastid. It localises to the chloroplast. The protein resides in the mitochondrion. It catalyses the reaction RNA(n) + a ribonucleoside 5'-triphosphate = RNA(n+1) + diphosphate. In terms of biological role, DNA-dependent RNA polymerase catalyzes the transcription of DNA into RNA using the four ribonucleoside triphosphates as substrates. The sequence is that of DNA-directed RNA polymerase 2, chloroplastic/mitochondrial (RPOT2) from Arabidopsis thaliana (Mouse-ear cress).